The sequence spans 366 residues: cAMP-dependent protein kinase regulatory subunit (366 aa).

The segment at 1-121 (MSGGNEEDQL…SLESAMRKNL (121 aa)) is dimerization and phosphorylation. The segment at 55–87 (QRAQEGGNPDAADDDDIIVEPPKRSGGRRTGIS) is disordered. A Pseudophosphorylation motif motif is present at residues 82–86 (RRTGI). Residue S87 is modified to Phosphoserine. Residues 122-239 (LFAH…SKVQ), E187, R196, 240-366 (ILAD…KLMT), E311, and R320 contribute to the 3',5'-cyclic AMP site.

Belongs to the cAMP-dependent kinase regulatory chain family. Tetramer, composed of 2 regulatory (R) and 2 catalytic (C) subunits. In the presence of cAMP it dissociates into 2 active monomeric C subunits and an R dimer that binds four cAMP molecules. Post-translationally, the pseudophosphorylation site binds to the substrate-binding region of the catalytic chain but is not phosphorylated. The physiological significance of phosphorylations by other kinases is unclear.

Its subcellular location is the cytoplasm. It is found in the cytosol. Its function is as follows. Controls the rhythmic contraction of enteric muscles probably by regulating G-protein coupled receptor aex-2-mediated calcium influx in GABAergic DVB neurons. The sequence is that of cAMP-dependent protein kinase regulatory subunit (kin-2) from Caenorhabditis elegans.